The following is a 323-amino-acid chain: Formimidoylglutamase (323 aa).

Positions 131, 157, 159, 161, 245, and 247 each coordinate Mn(2+).

The protein belongs to the arginase family. It depends on Mn(2+) as a cofactor.

It carries out the reaction N-formimidoyl-L-glutamate + H2O = formamide + L-glutamate. It participates in amino-acid degradation; L-histidine degradation into L-glutamate; L-glutamate from N-formimidoyl-L-glutamate (hydrolase route): step 1/1. In terms of biological role, catalyzes the conversion of N-formimidoyl-L-glutamate to L-glutamate and formamide. This is Formimidoylglutamase from Geobacillus kaustophilus (strain HTA426).